Reading from the N-terminus, the 229-residue chain is Cytochrome c oxidase subunit 2 (229 aa).

Over Met-1–His-26 the chain is Mitochondrial intermembrane. A helical membrane pass occupies residues Ala-27–Asn-48. Residues Ser-49–Glu-62 are Mitochondrial matrix-facing. A helical membrane pass occupies residues Met-63–Arg-82. The Mitochondrial intermembrane portion of the chain corresponds to Leu-83–Ser-229. Cu cation is bound by residues His-161, Cys-196, Glu-198, Cys-200, His-204, and Met-207. Glu-198 is a binding site for Mg(2+).

The protein belongs to the cytochrome c oxidase subunit 2 family. In terms of assembly, component of the cytochrome c oxidase (complex IV, CIV), a multisubunit enzyme composed of a catalytic core of 3 subunits and several supernumerary subunits. The complex exists as a monomer or a dimer and forms supercomplexes (SCs) in the inner mitochondrial membrane with ubiquinol-cytochrome c oxidoreductase (cytochrome b-c1 complex, complex III, CIII). Cu cation serves as cofactor.

Its subcellular location is the mitochondrion inner membrane. The catalysed reaction is 4 Fe(II)-[cytochrome c] + O2 + 8 H(+)(in) = 4 Fe(III)-[cytochrome c] + 2 H2O + 4 H(+)(out). Its function is as follows. Component of the cytochrome c oxidase, the last enzyme in the mitochondrial electron transport chain which drives oxidative phosphorylation. The respiratory chain contains 3 multisubunit complexes succinate dehydrogenase (complex II, CII), ubiquinol-cytochrome c oxidoreductase (cytochrome b-c1 complex, complex III, CIII) and cytochrome c oxidase (complex IV, CIV), that cooperate to transfer electrons derived from NADH and succinate to molecular oxygen, creating an electrochemical gradient over the inner membrane that drives transmembrane transport and the ATP synthase. Cytochrome c oxidase is the component of the respiratory chain that catalyzes the reduction of oxygen to water. Electrons originating from reduced cytochrome c in the intermembrane space (IMS) are transferred via the dinuclear copper A center (CU(A)) of subunit 2 and heme A of subunit 1 to the active site in subunit 1, a binuclear center (BNC) formed by heme A3 and copper B (CU(B)). The BNC reduces molecular oxygen to 2 water molecules using 4 electrons from cytochrome c in the IMS and 4 protons from the mitochondrial matrix. This is Cytochrome c oxidase subunit 2 (mt:CoII) from Drosophila miranda (Fruit fly).